Reading from the N-terminus, the 308-residue chain is MSFKNRNVISMKDFSRKEINYILDTAEKLEPVARGKKRSRLLDGKIIALLFFEPSTRTRLSFESAAQRLGGQVLNLGSVEASSVMKGENLADTIRVISKYADLIVLRHPLDGSARMAAEFASVPIINGGDGSLHHPTQTFLDLYTIRRESHLEGLKIAMAGDLKYGRTVHSLCHALSLYGAEITLVSPPELRMPQEIIRDLQKNNIRIRETDALEEIIGDVEVLYMTRVQRERFPDPEEYEKVKNKLKVTGDLLKNADPSLKILHPLPRVNEISPEVDSTPYACYFEQAFYGVPTRMALLALATGVIE.

Residues arginine 57 and threonine 58 each contribute to the carbamoyl phosphate site. L-aspartate is bound at residue lysine 86. Carbamoyl phosphate-binding residues include arginine 107, histidine 135, and glutamine 138. The L-aspartate site is built by arginine 167 and arginine 228. Positions 267 and 268 each coordinate carbamoyl phosphate.

It belongs to the aspartate/ornithine carbamoyltransferase superfamily. ATCase family. In terms of assembly, heterooligomer of catalytic and regulatory chains.

It carries out the reaction carbamoyl phosphate + L-aspartate = N-carbamoyl-L-aspartate + phosphate + H(+). It functions in the pathway pyrimidine metabolism; UMP biosynthesis via de novo pathway; (S)-dihydroorotate from bicarbonate: step 2/3. Catalyzes the condensation of carbamoyl phosphate and aspartate to form carbamoyl aspartate and inorganic phosphate, the committed step in the de novo pyrimidine nucleotide biosynthesis pathway. The protein is Aspartate carbamoyltransferase catalytic subunit of Methanosarcina barkeri (strain Fusaro / DSM 804).